Here is a 419-residue protein sequence, read N- to C-terminus: Serine--tRNA ligase (419 aa).

L-serine is bound at residue 226 to 228 (TSE). ATP-binding positions include 257–259 (RRE) and V273. E280 provides a ligand contact to L-serine. 344–347 (ELTS) lines the ATP pocket. T379 is an L-serine binding site.

This sequence belongs to the class-II aminoacyl-tRNA synthetase family. Type-1 seryl-tRNA synthetase subfamily. In terms of assembly, homodimer. The tRNA molecule binds across the dimer.

The protein localises to the cytoplasm. The catalysed reaction is tRNA(Ser) + L-serine + ATP = L-seryl-tRNA(Ser) + AMP + diphosphate + H(+). It catalyses the reaction tRNA(Sec) + L-serine + ATP = L-seryl-tRNA(Sec) + AMP + diphosphate + H(+). The protein operates within aminoacyl-tRNA biosynthesis; selenocysteinyl-tRNA(Sec) biosynthesis; L-seryl-tRNA(Sec) from L-serine and tRNA(Sec): step 1/1. Catalyzes the attachment of serine to tRNA(Ser). Is also able to aminoacylate tRNA(Sec) with serine, to form the misacylated tRNA L-seryl-tRNA(Sec), which will be further converted into selenocysteinyl-tRNA(Sec). This Corynebacterium diphtheriae (strain ATCC 700971 / NCTC 13129 / Biotype gravis) protein is Serine--tRNA ligase.